The sequence spans 249 residues: MIRILVSNDDGVNAPGIKALTEALVEIANVMTVAPDRNCSGASNSLTLTNPLRINRLDNGYISVHGTPTDCVHLAIRELCDGEPDMVVSGINAGANMGDDTLYSGTVAAAMEGRFLGFPAVAISLNGREFKHYQSAAVYARRIVQGLLLHPLASDQILNINVPDLPLDEIKGIRVTRLGARHKAEGIVRTKDPAGREIFWLGPPGLEQDATEGTDFHAVANGYVSITPLTVDLTAYRQLSVLQNWVDKI.

The a divalent metal cation site is built by aspartate 9, aspartate 10, serine 40, and asparagine 92.

Belongs to the SurE nucleotidase family. The cofactor is a divalent metal cation.

It localises to the cytoplasm. It catalyses the reaction a ribonucleoside 5'-phosphate + H2O = a ribonucleoside + phosphate. Its function is as follows. Nucleotidase that shows phosphatase activity on nucleoside 5'-monophosphates. The protein is 5'-nucleotidase SurE of Shewanella putrefaciens (strain CN-32 / ATCC BAA-453).